The following is a 338-amino-acid chain: MEMTHYEKTPLIRQVFNNGKTNSWFYVKHEILQPGGSFKSRGIGHLIRKNNEEALSEGSGKLAVFSSSGGNAGLAAATACRSMALNCSVVVPKTTKPRMVKKIQSAGAKVIIHGDHWGEADEYLRHELMAQESQHGSKTLYVHPFDNETIWEGHSTIVDEIIEQLKENDISLPRVKALVCSVGGGGLFSGIIKGLERNHLAEKIPVVAVETAGCDVLNKSLKKGSPVTLEKLTSVATSLGSPYIASFAFESFNKYGCKSVVLSDQDVLATCLRYADDYNFIVEPACGASLHLCYHPEILEDILEQKIYEDDIVIIIACGGSCMTYEDFVKASSTLNVS.

Residue Lys-39 is modified to N6-(pyridoxal phosphate)lysine.

It belongs to the serine/threonine dehydratase family. Pyridoxal 5'-phosphate serves as cofactor.

Its subcellular location is the cytoplasm. The enzyme catalyses L-serine = pyruvate + NH4(+). It participates in carbohydrate biosynthesis; gluconeogenesis. This chain is L-serine dehydratase (SDL1), found in Saccharomyces cerevisiae (strain AWRI1631) (Baker's yeast).